Here is a 341-residue protein sequence, read N- to C-terminus: Heat-inducible transcription repressor HrcA (341 aa).

It belongs to the HrcA family.

Functionally, negative regulator of class I heat shock genes (grpE-dnaK-dnaJ and groELS operons). Prevents heat-shock induction of these operons. The chain is Heat-inducible transcription repressor HrcA from Leptothrix cholodnii (strain ATCC 51168 / LMG 8142 / SP-6) (Leptothrix discophora (strain SP-6)).